The sequence spans 446 residues: Tubulin beta-2 chain (446 aa).

Positions 11, 69, 138, 142, 143, 144, 204, and 226 each coordinate GTP. E69 contacts Mg(2+). Residues 424–446 (QYQEATADEEGEFDEDEEGGGDE) form a disordered region. Over residues 429–446 (TADEEGEFDEDEEGGGDE) the composition is skewed to acidic residues.

Belongs to the tubulin family. As to quaternary structure, dimer of alpha and beta chains. A typical microtubule is a hollow water-filled tube with an outer diameter of 25 nm and an inner diameter of 15 nM. Alpha-beta heterodimers associate head-to-tail to form protofilaments running lengthwise along the microtubule wall with the beta-tubulin subunit facing the microtubule plus end conferring a structural polarity. Microtubules usually have 13 protofilaments but different protofilament numbers can be found in some organisms and specialized cells. The cofactor is Mg(2+).

Its subcellular location is the cytoplasm. It localises to the cytoskeleton. In terms of biological role, tubulin is the major constituent of microtubules, a cylinder consisting of laterally associated linear protofilaments composed of alpha- and beta-tubulin heterodimers. Microtubules grow by the addition of GTP-tubulin dimers to the microtubule end, where a stabilizing cap forms. Below the cap, tubulin dimers are in GDP-bound state, owing to GTPase activity of alpha-tubulin. This Drosophila erecta (Fruit fly) protein is Tubulin beta-2 chain (betaTub85D).